A 63-amino-acid chain; its full sequence is Large ribosomal subunit protein bL32 (63 aa).

Belongs to the bacterial ribosomal protein bL32 family.

The sequence is that of Large ribosomal subunit protein bL32 from Lacticaseibacillus paracasei (strain ATCC 334 / BCRC 17002 / CCUG 31169 / CIP 107868 / KCTC 3260 / NRRL B-441) (Lactobacillus paracasei).